A 70-amino-acid polypeptide reads, in one-letter code: Large ribosomal subunit protein eL38 (70 aa).

Belongs to the eukaryotic ribosomal protein eL38 family.

The polypeptide is Large ribosomal subunit protein eL38 (RpL38) (Spodoptera frugiperda (Fall armyworm)).